Here is a 2294-residue protein sequence, read N- to C-terminus: Protein Ycf2 (2294 aa).

Gly1648–Ser1655 contributes to the ATP binding site.

This sequence belongs to the Ycf2 family.

It localises to the plastid. It is found in the chloroplast stroma. Functionally, probable ATPase of unknown function. Its presence in a non-photosynthetic plant (Epifagus virginiana) and experiments in tobacco indicate that it has an essential function which is probably not related to photosynthesis. In Arabidopsis thaliana (Mouse-ear cress), this protein is Protein Ycf2.